The following is a 166-amino-acid chain: UPF0336 protein Mb0656 (166 aa).

This sequence belongs to the UPF0336 family.

This is UPF0336 protein Mb0656 from Mycobacterium bovis (strain ATCC BAA-935 / AF2122/97).